A 643-amino-acid chain; its full sequence is Phosphomethylpyrimidine synthase (643 aa).

Residues Asn248, Met277, Tyr306, His342, 362–364, 403–406, and Glu442 contribute to the substrate site; these read SRG and DGLR. His446 provides a ligand contact to Zn(2+). Tyr469 lines the substrate pocket. Residue His510 participates in Zn(2+) binding. [4Fe-4S] cluster contacts are provided by Cys590, Cys593, and Cys598.

Belongs to the ThiC family. As to quaternary structure, homodimer. Requires [4Fe-4S] cluster as cofactor.

It carries out the reaction 5-amino-1-(5-phospho-beta-D-ribosyl)imidazole + S-adenosyl-L-methionine = 4-amino-2-methyl-5-(phosphooxymethyl)pyrimidine + CO + 5'-deoxyadenosine + formate + L-methionine + 3 H(+). The protein operates within cofactor biosynthesis; thiamine diphosphate biosynthesis. Its function is as follows. Catalyzes the synthesis of the hydroxymethylpyrimidine phosphate (HMP-P) moiety of thiamine from aminoimidazole ribotide (AIR) in a radical S-adenosyl-L-methionine (SAM)-dependent reaction. The sequence is that of Phosphomethylpyrimidine synthase from Paraburkholderia phymatum (strain DSM 17167 / CIP 108236 / LMG 21445 / STM815) (Burkholderia phymatum).